The chain runs to 379 residues: Bifunctional riboflavin kinase/FMN phosphatase (379 aa).

Ser2 is modified (N-acetylserine). The Nucleophile; for FMN phosphatase activity role is filled by Asp17. Mg(2+) is bound by residues Asp17 and Asp19. The active-site Proton donor; for FMN phosphatase activity is Asp19. Positions 248, 254, 260, and 262 each coordinate ATP. Position 260 (Thr260) interacts with Mg(2+). Glu312 serves as the catalytic Nucleophile; for riboflavin kinase activity. ATP-binding residues include Leu315, His317, and Tyr324. FMN contacts are provided by Arg337 and Phe342.

This sequence in the N-terminal section; belongs to the HAD-like hydrolase superfamily. CbbY/CbbZ/Gph/YieH family. It in the C-terminal section; belongs to the flavokinase family. As to quaternary structure, monomer. Requires Mg(2+) as cofactor.

It catalyses the reaction riboflavin + ATP = FMN + ADP + H(+). It carries out the reaction FMN + H2O = riboflavin + phosphate. It participates in cofactor biosynthesis; FMN biosynthesis; FMN from riboflavin (ATP route): step 1/1. In terms of biological role, bifunctional enzyme that catalyzes the hydrolysis of flavin-mononucleotide (FMN) to riboflavin (vitamin B2) and the phosphorylation of riboflavin to form (FMN) coenzyme. The sequence is that of Bifunctional riboflavin kinase/FMN phosphatase from Arabidopsis thaliana (Mouse-ear cress).